The primary structure comprises 497 residues: Glycerol kinase (497 aa).

Residue threonine 13 participates in ADP binding. 3 residues coordinate ATP: threonine 13, threonine 14, and serine 15. Threonine 13 provides a ligand contact to sn-glycerol 3-phosphate. Arginine 17 contacts ADP. Sn-glycerol 3-phosphate contacts are provided by arginine 83, glutamate 84, and tyrosine 135. Glycerol-binding residues include arginine 83, glutamate 84, and tyrosine 135. Histidine 231 bears the Phosphohistidine; by HPr mark. Aspartate 245 contacts sn-glycerol 3-phosphate. Aspartate 245 and glutamine 246 together coordinate glycerol. 2 residues coordinate ADP: threonine 267 and glycine 310. Residues threonine 267, glycine 310, glutamine 314, and glycine 411 each coordinate ATP. ADP contacts are provided by glycine 411 and asparagine 415.

It belongs to the FGGY kinase family. As to quaternary structure, homotetramer and homodimer (in equilibrium). Post-translationally, the phosphoenolpyruvate-dependent sugar phosphotransferase system (PTS), including enzyme I, and histidine-containing protein (HPr) are required for the phosphorylation, which leads to the activation of the enzyme.

It catalyses the reaction glycerol + ATP = sn-glycerol 3-phosphate + ADP + H(+). It functions in the pathway polyol metabolism; glycerol degradation via glycerol kinase pathway; sn-glycerol 3-phosphate from glycerol: step 1/1. With respect to regulation, activated by phosphorylation and inhibited by fructose 1,6-bisphosphate (FBP). Its function is as follows. Key enzyme in the regulation of glycerol uptake and metabolism. Catalyzes the phosphorylation of glycerol to yield sn-glycerol 3-phosphate. The sequence is that of Glycerol kinase from Listeria innocua serovar 6a (strain ATCC BAA-680 / CLIP 11262).